Reading from the N-terminus, the 458-residue chain is Light-independent protochlorophyllide reductase subunit N (458 aa).

Residues C22, C47, and C107 each contribute to the [4Fe-4S] cluster site.

Belongs to the BchN/ChlN family. In terms of assembly, protochlorophyllide reductase is composed of three subunits; ChlL, ChlN and ChlB. Forms a heterotetramer of two ChlB and two ChlN subunits. [4Fe-4S] cluster serves as cofactor.

It localises to the plastid. The protein localises to the chloroplast. It catalyses the reaction chlorophyllide a + oxidized 2[4Fe-4S]-[ferredoxin] + 2 ADP + 2 phosphate = protochlorophyllide a + reduced 2[4Fe-4S]-[ferredoxin] + 2 ATP + 2 H2O. The protein operates within porphyrin-containing compound metabolism; chlorophyll biosynthesis (light-independent). Functionally, component of the dark-operative protochlorophyllide reductase (DPOR) that uses Mg-ATP and reduced ferredoxin to reduce ring D of protochlorophyllide (Pchlide) to form chlorophyllide a (Chlide). This reaction is light-independent. The NB-protein (ChlN-ChlB) is the catalytic component of the complex. The polypeptide is Light-independent protochlorophyllide reductase subunit N (Chaetosphaeridium globosum (Charophycean green alga)).